Consider the following 136-residue polypeptide: MILGIGTDLCDIRRIENSLERFGERFTHRVFTDGEREKCDRRAARGPSYARRFAAKEACAKALGTGMSQGVFWRDMEVINAASGQPTLRLTGGAREHLARMVPPGHEARLHVTLTDEPPLAQAFVIIEAVPVAGAS.

2 residues coordinate Mg(2+): Asp-8 and Glu-57.

This sequence belongs to the P-Pant transferase superfamily. AcpS family. Mg(2+) serves as cofactor.

It localises to the cytoplasm. It catalyses the reaction apo-[ACP] + CoA = holo-[ACP] + adenosine 3',5'-bisphosphate + H(+). Functionally, transfers the 4'-phosphopantetheine moiety from coenzyme A to a Ser of acyl-carrier-protein. In Methylorubrum populi (strain ATCC BAA-705 / NCIMB 13946 / BJ001) (Methylobacterium populi), this protein is Holo-[acyl-carrier-protein] synthase.